A 592-amino-acid polypeptide reads, in one-letter code: Pyruvate decarboxylase 3 (592 aa).

Residues aspartate 54 and histidine 141 each coordinate substrate. Residues 419-501 (DSWFNCQKLK…FLINNGGYTI (83 aa)) are thiamine pyrophosphate binding. Mg(2+) contacts are provided by aspartate 469, asparagine 496, and glycine 498. Position 502 (glutamate 502) interacts with substrate.

Belongs to the TPP enzyme family. As to quaternary structure, homotetramer. The cofactor is a metal cation. It depends on thiamine diphosphate as a cofactor. Expressed at low levels in roots and shoots.

The catalysed reaction is a 2-oxocarboxylate + H(+) = an aldehyde + CO2. This is Pyruvate decarboxylase 3 (PDC3) from Arabidopsis thaliana (Mouse-ear cress).